The following is a 267-amino-acid chain: 3-methyl-2-oxobutanoate hydroxymethyltransferase (267 aa).

2 residues coordinate Mg(2+): D45 and D84. 3-methyl-2-oxobutanoate contacts are provided by residues 45 to 46 (DS), D84, and K113. Residue E115 participates in Mg(2+) binding. The Proton acceptor role is filled by E182.

It belongs to the PanB family. Homodecamer; pentamer of dimers. It depends on Mg(2+) as a cofactor.

The protein resides in the cytoplasm. The catalysed reaction is 3-methyl-2-oxobutanoate + (6R)-5,10-methylene-5,6,7,8-tetrahydrofolate + H2O = 2-dehydropantoate + (6S)-5,6,7,8-tetrahydrofolate. It functions in the pathway cofactor biosynthesis; coenzyme A biosynthesis. Catalyzes the reversible reaction in which hydroxymethyl group from 5,10-methylenetetrahydrofolate is transferred onto alpha-ketoisovalerate to form ketopantoate. The polypeptide is 3-methyl-2-oxobutanoate hydroxymethyltransferase (Saccharolobus islandicus (strain M.16.27) (Sulfolobus islandicus)).